A 428-amino-acid polypeptide reads, in one-letter code: Adenylosuccinate synthetase (428 aa).

GTP is bound by residues glycine 12 to lysine 18 and glycine 40 to threonine 42. Residue aspartate 13 is the Proton acceptor of the active site. 2 residues coordinate Mg(2+): aspartate 13 and glycine 40. Residues aspartate 13–lysine 16, asparagine 38–histidine 41, threonine 130, arginine 144, glutamine 225, threonine 240, and arginine 304 each bind IMP. The active-site Proton donor is the histidine 41. Valine 300–arginine 306 contacts substrate. GTP is bound by residues arginine 306, lysine 332–aspartate 334, and serine 414–glycine 416.

This sequence belongs to the adenylosuccinate synthetase family. Homodimer. The cofactor is Mg(2+).

It is found in the cytoplasm. It catalyses the reaction IMP + L-aspartate + GTP = N(6)-(1,2-dicarboxyethyl)-AMP + GDP + phosphate + 2 H(+). It participates in purine metabolism; AMP biosynthesis via de novo pathway; AMP from IMP: step 1/2. Plays an important role in the de novo pathway of purine nucleotide biosynthesis. Catalyzes the first committed step in the biosynthesis of AMP from IMP. The chain is Adenylosuccinate synthetase from Clostridium acetobutylicum (strain ATCC 824 / DSM 792 / JCM 1419 / IAM 19013 / LMG 5710 / NBRC 13948 / NRRL B-527 / VKM B-1787 / 2291 / W).